The sequence spans 705 residues: MARTTPIERYRNFGIMAHIDAGKTTTSERILFYTGVSHKIGEVHDGAAVMDWMEQEQERGITITSAATTAFWTGMDKSMPQHRFNIIDTPGHVDFTIEVERSLRVLDGAVFVLCAVGGVQPQSETVWRQANKYSVPRMAFVNKMDRTGANFDKVVEQLKARLGAYAVPMQVPIGAEDGFEGVVDLLKMKAIHWDTASQGTTFEYRDIPADLVDVATEARSFMVEAAAEASEALMDKYLNDGDLSEDEILSGLRERTLKVEIVPVFCGSAFKNKGVQAMLDGVVHLLPSPADRPPVQGIDENEKEDTRDATDTAPFSALAFKIMTDPFVGSLTFFRVYSGTLNSGDQVYNPVKSKKERVGRILQMHSNNREEIKEVRAGDIAAAVGLKDVTTGDTLCAQDKIITLERMVFPEPVISMAVEPKTKSDQEKMGMALGRLAQEDPSFRVKTDEESGQTIISGMGELHLDIIVDRMRREFNVEANVGKPQVAYRETIRKSDVKSDYKHAKQSGGKGQYGHVVIELSPMTEEDRKNDSVKDDFLFINDITGGIIPKEFIPSVEKGLRETITSGPIAGFPVVGVKVKLVFGSYHDVDSSEMAFKLAASMAFKQGFAKASPVLLEPIMKVEIVSPEDYLGDVMGDVSRRRGVLQGQDDSPSGKIINAMIPLGEMFGYATSLRSMSQGRATFSMEFDHYEEAPANIADAVTKKG.

The tr-type G domain maps to 8–290 (ERYRNFGIMA…GVVHLLPSPA (283 aa)). Residues 17 to 24 (AHIDAGKT), 88 to 92 (DTPGH), and 142 to 145 (NKMD) contribute to the GTP site. The disordered stretch occupies residues 290 to 309 (ADRPPVQGIDENEKEDTRDA).

The protein belongs to the TRAFAC class translation factor GTPase superfamily. Classic translation factor GTPase family. EF-G/EF-2 subfamily.

The protein resides in the cytoplasm. Catalyzes the GTP-dependent ribosomal translocation step during translation elongation. During this step, the ribosome changes from the pre-translocational (PRE) to the post-translocational (POST) state as the newly formed A-site-bound peptidyl-tRNA and P-site-bound deacylated tRNA move to the P and E sites, respectively. Catalyzes the coordinated movement of the two tRNA molecules, the mRNA and conformational changes in the ribosome. In Xanthomonas campestris pv. campestris (strain 8004), this protein is Elongation factor G.